The sequence spans 681 residues: MSKHILVTSALPYANGSIHLGHILEAVQTDIWVRFQKLIGNECYFFCADDTHGTPIMIAAKKAGKTPESMIEEVQKEHYKDLTSFGVEYDNYYTTNSEENKKFSESIYLTLKKNGHIVARNIEQSYCEHDKMFLPDRFIKGTCPKCGAKDQYGDSCEVCGTSYSPKDLKDSYCSICGTTPVLRESKHLFFKLQDFQNQLKNWMEEGNRLNEGAQKKLQEWFTSGLQEWDISRDGPYFGFAIPEEENKYFYVWLDAPIGYMASSLNHLKDERKFNEFWKEGKGEIVHFIGKDILYFHGLFWPAMLMGSGYKAPSQLNVHGFLTVNGEKMSKSRGTFINASTFAKYLDVEHFRFYLACRLGSGMEDVDISFDDFVSRVNSDLIGNLVNLVSRVSTSILDKMDRKLGILSTEGKSLVSELLSKETEIREAYVSRNYSKVMRDITGLGDKVNKYVNDYAPWNLIKTDVEKAREVVTTSLNCAKILFTYLAPVTPKIVHSLADLFQIPNLSFLNLTETIENKVLGPYQMLSKRVEEKNITIMITETKETFEKSNPEKAKQDPSKSNTNEVKSATVSEDGFITIDELSKVELRVGLIKEANPVEGADKLLFVKVDLGEKGIKNVFAGIKASYTAEELVGKKVVVVANLKPRQMKFGLSEAMLLASGKDKTLSLFVPDRDASPGDLLK.

Residues Pro-12–His-22 carry the 'HIGH' region motif. Positions 143, 146, 156, and 159 each coordinate Zn(2+). The short motif at Lys-327 to Ser-331 is the 'KMSKS' region element. Lys-330 serves as a coordination point for ATP. Residues Phe-545–Pro-557 show a composition bias toward basic and acidic residues. The interval Phe-545–Lys-566 is disordered. The tRNA-binding domain maps to Glu-580–Lys-681.

This sequence belongs to the class-I aminoacyl-tRNA synthetase family. MetG type 1 subfamily. As to quaternary structure, homodimer. The cofactor is Zn(2+).

The protein localises to the cytoplasm. The catalysed reaction is tRNA(Met) + L-methionine + ATP = L-methionyl-tRNA(Met) + AMP + diphosphate. Is required not only for elongation of protein synthesis but also for the initiation of all mRNA translation through initiator tRNA(fMet) aminoacylation. This chain is Methionine--tRNA ligase, found in Leptospira biflexa serovar Patoc (strain Patoc 1 / ATCC 23582 / Paris).